The following is a 56-amino-acid chain: Large ribosomal subunit protein bL33 (56 aa).

Belongs to the bacterial ribosomal protein bL33 family.

The protein is Large ribosomal subunit protein bL33 of Actinobacillus succinogenes (strain ATCC 55618 / DSM 22257 / CCUG 43843 / 130Z).